Consider the following 47-residue polypeptide: uncharacterized protein (47 aa).

Residues 19–47 (EKVLKNQNPDRLSHMTDKNAQPKSKEKEE) form a disordered region.

This is an uncharacterized protein from Bacillus subtilis (strain 168).